The primary structure comprises 215 residues: Cytochrome b6 (215 aa).

The helical transmembrane segment at 32–52 (IFYCLGGITLTCFLVQVATGF) threads the bilayer. A heme c-binding site is contributed by C35. Heme b contacts are provided by H86 and H100. 3 helical membrane passes run 90 to 110 (ASMM…TGGF), 116 to 136 (LTWI…VTGY), and 186 to 206 (LHTF…FLMI). The heme b site is built by H187 and H202.

The protein belongs to the cytochrome b family. PetB subfamily. As to quaternary structure, the 4 large subunits of the cytochrome b6-f complex are cytochrome b6, subunit IV (17 kDa polypeptide, PetD), cytochrome f and the Rieske protein, while the 4 small subunits are PetG, PetL, PetM and PetN. The complex functions as a dimer. Requires heme b as cofactor. The cofactor is heme c.

It localises to the plastid. Its subcellular location is the chloroplast thylakoid membrane. Component of the cytochrome b6-f complex, which mediates electron transfer between photosystem II (PSII) and photosystem I (PSI), cyclic electron flow around PSI, and state transitions. This is Cytochrome b6 from Psilotum nudum (Whisk fern).